The primary structure comprises 475 residues: ATP synthase subunit beta (475 aa).

An ATP-binding site is contributed by 148–155 (GGAGVGKT).

The protein belongs to the ATPase alpha/beta chains family. As to quaternary structure, F-type ATPases have 2 components, CF(1) - the catalytic core - and CF(0) - the membrane proton channel. CF(1) has five subunits: alpha(3), beta(3), gamma(1), delta(1), epsilon(1). CF(0) has three main subunits: a(1), b(2) and c(9-12). The alpha and beta chains form an alternating ring which encloses part of the gamma chain. CF(1) is attached to CF(0) by a central stalk formed by the gamma and epsilon chains, while a peripheral stalk is formed by the delta and b chains.

The protein localises to the cell inner membrane. It catalyses the reaction ATP + H2O + 4 H(+)(in) = ADP + phosphate + 5 H(+)(out). Its function is as follows. Produces ATP from ADP in the presence of a proton gradient across the membrane. The catalytic sites are hosted primarily by the beta subunits. This Psychrobacter sp. (strain PRwf-1) protein is ATP synthase subunit beta.